Reading from the N-terminus, the 376-residue chain is Chaperone protein DnaJ (376 aa).

In terms of domain architecture, J spans 5–70 (DYYEVLGVGR…DKKAAYDQFG (66 aa)). The CR-type zinc-finger motif lies at 132 to 210 (GLTKELRIPT…CHGEGRVEKS (79 aa)). Cysteine 145, cysteine 148, cysteine 162, cysteine 165, cysteine 184, cysteine 187, cysteine 198, and cysteine 201 together coordinate Zn(2+). CXXCXGXG motif repeat units lie at residues 145-152 (CDLCDGSG), 162-169 (CGTCHGQG), 184-191 (CPTCHGRG), and 198-205 (CGKCHGEG).

The protein belongs to the DnaJ family. As to quaternary structure, homodimer. It depends on Zn(2+) as a cofactor.

Its subcellular location is the cytoplasm. Functionally, participates actively in the response to hyperosmotic and heat shock by preventing the aggregation of stress-denatured proteins and by disaggregating proteins, also in an autonomous, DnaK-independent fashion. Unfolded proteins bind initially to DnaJ; upon interaction with the DnaJ-bound protein, DnaK hydrolyzes its bound ATP, resulting in the formation of a stable complex. GrpE releases ADP from DnaK; ATP binding to DnaK triggers the release of the substrate protein, thus completing the reaction cycle. Several rounds of ATP-dependent interactions between DnaJ, DnaK and GrpE are required for fully efficient folding. Also involved, together with DnaK and GrpE, in the DNA replication of plasmids through activation of initiation proteins. This Shewanella loihica (strain ATCC BAA-1088 / PV-4) protein is Chaperone protein DnaJ.